The chain runs to 429 residues: Glutamyl-tRNA reductase (429 aa).

Residues Thr49–Arg52, Ser107, Glu112–Gln114, and Gln118 each bind substrate. Residue Cys50 is the Nucleophile of the active site. Gly187–Ile192 is a binding site for NADP(+).

It belongs to the glutamyl-tRNA reductase family. Homodimer.

It carries out the reaction (S)-4-amino-5-oxopentanoate + tRNA(Glu) + NADP(+) = L-glutamyl-tRNA(Glu) + NADPH + H(+). Its pathway is porphyrin-containing compound metabolism; protoporphyrin-IX biosynthesis; 5-aminolevulinate from L-glutamyl-tRNA(Glu): step 1/2. Functionally, catalyzes the NADPH-dependent reduction of glutamyl-tRNA(Glu) to glutamate 1-semialdehyde (GSA). The polypeptide is Glutamyl-tRNA reductase (Pseudomonas fluorescens (strain SBW25)).